A 317-amino-acid polypeptide reads, in one-letter code: Beta-ketoacyl-[acyl-carrier-protein] synthase III (317 aa).

Active-site residues include C112 and H244. An ACP-binding region spans residues 245 to 249 (QANLR). N274 is an active-site residue.

The protein belongs to the thiolase-like superfamily. FabH family. Homodimer.

Its subcellular location is the cytoplasm. The enzyme catalyses malonyl-[ACP] + acetyl-CoA + H(+) = 3-oxobutanoyl-[ACP] + CO2 + CoA. It participates in lipid metabolism; fatty acid biosynthesis. Its function is as follows. Catalyzes the condensation reaction of fatty acid synthesis by the addition to an acyl acceptor of two carbons from malonyl-ACP. Catalyzes the first condensation reaction which initiates fatty acid synthesis and may therefore play a role in governing the total rate of fatty acid production. Possesses both acetoacetyl-ACP synthase and acetyl transacylase activities. Its substrate specificity determines the biosynthesis of branched-chain and/or straight-chain of fatty acids. In Shigella boydii serotype 4 (strain Sb227), this protein is Beta-ketoacyl-[acyl-carrier-protein] synthase III.